The sequence spans 828 residues: Sarcolemmal membrane-associated protein (828 aa).

The interval 1-163 (MPSALAIFTC…AANTPSMYSQ (163 aa)) is necessary for targeting to centrosomes. Residues 1–802 (MPSALAIFTC…REKGNNKPWP (802 aa)) are Cytoplasmic-facing. In terms of domain architecture, FHA spans 28–85 (IKIGRSVARCRPAQNNATFDCKVLSRNHALVWFDHKTGKFYLQDTKSSNGTFINSQRL). Position 148 is a phosphoserine (Ser-148). Coiled-coil stretches lie at residues 167-202 (QLSQ…ASDT) and 230-388 (NQTE…QEKT). A helical; Anchor for type IV membrane protein membrane pass occupies residues 339 to 359 (KKELQHKIDEMEEKEQELQAK). The span at 433–446 (KLSKENQTRAKESD) shows a compositional bias: basic and acidic residues. Residues 433-467 (KLSKENQTRAKESDFSDTLSPSKEKSSDDTTDAQM) form a disordered region. Ser-448 and Ser-452 each carry phosphoserine. Residues 477 to 799 (AKVSLLKDDL…KLLREKGNNK (323 aa)) adopt a coiled-coil conformation. A helical; Anchor for type IV membrane protein transmembrane segment spans residues 803 to 823 (WMPMLAALVAVTAIVLYVPGL). The Extracellular portion of the chain corresponds to 824 to 828 (ARASP).

This sequence belongs to the SLMAP family. In terms of assembly, homodimer. Interacts with myosin. Interacts with SIKE1 and both associate with the STRIPAK core complex composed of PP2A catalytic and scaffolding subunits, the striatins (PP2A regulatory subunits), the striatin-associated proteins MOB4, STRIP1 and STRIP2, PDCD10 and members of the STE20 kinases, such as STK24 and STK26. Interacts (via FHA domain) with STK3 (when phosphorylated); the interaction associates STK3 with the STRIPAK complex.

Its subcellular location is the cell membrane. The protein resides in the sarcolemma. The protein localises to the cytoplasm. It localises to the myofibril. It is found in the sarcomere. Its subcellular location is the m line. The protein resides in the z line. The protein localises to the cytoskeleton. It localises to the microtubule organizing center. It is found in the centrosome. Its subcellular location is the endoplasmic reticulum membrane. The protein resides in the mitochondrion membrane. Its function is as follows. Associates with the striatin-interacting phosphatase and kinase (STRIPAK) core complex, forming the extended (SIKE1:SLMAP)STRIPAK complex. The (SIKE1:SLMAP)STRIPAK complex dephosphorylates STK3 leading to the inhibition of Hippo signaling and the control of cell growth. May play a role during myoblast fusion. This chain is Sarcolemmal membrane-associated protein, found in Homo sapiens (Human).